We begin with the raw amino-acid sequence, 255 residues long: Proteasome subunit alpha type-3 (255 aa).

Serine 2 carries the post-translational modification N-acetylserine. 3 positions are modified to N6-acetyllysine: lysine 57, lysine 206, and lysine 230. Serine 243 and serine 250 each carry phosphoserine.

The protein belongs to the peptidase T1A family. The 26S proteasome consists of a 20S proteasome core and two 19S regulatory subunits. The 20S proteasome core is a barrel-shaped complex made of 28 subunits that are arranged in four stacked rings. The two outer rings are each formed by seven alpha subunits, and the two inner rings are formed by seven beta subunits. The proteolytic activity is exerted by three beta-subunits PSMB5, PSMB6 and PSMB7. Interacts with AURKB. Interacts with CDKN1A. Interacts with MDM2 and RB1. Interacts with the C-terminus of TBXA2R isoform 2. Interacts with DNAJB2.

It is found in the cytoplasm. Its subcellular location is the nucleus. Component of the 20S core proteasome complex involved in the proteolytic degradation of most intracellular proteins. This complex plays numerous essential roles within the cell by associating with different regulatory particles. Associated with two 19S regulatory particles, forms the 26S proteasome and thus participates in the ATP-dependent degradation of ubiquitinated proteins. The 26S proteasome plays a key role in the maintenance of protein homeostasis by removing misfolded or damaged proteins that could impair cellular functions, and by removing proteins whose functions are no longer required. Associated with the PA200 or PA28, the 20S proteasome mediates ubiquitin-independent protein degradation. This type of proteolysis is required in several pathways including spermatogenesis (20S-PA200 complex) or generation of a subset of MHC class I-presented antigenic peptides (20S-PA28 complex). Binds to the C-terminus of CDKN1A and thereby mediates its degradation. Negatively regulates the membrane trafficking of the cell-surface thromboxane A2 receptor (TBXA2R) isoform 2. The protein is Proteasome subunit alpha type-3 (PSMA3) of Bos taurus (Bovine).